Reading from the N-terminus, the 185-residue chain is Ribosome-recycling factor (185 aa).

Belongs to the RRF family.

It localises to the cytoplasm. Its function is as follows. Responsible for the release of ribosomes from messenger RNA at the termination of protein biosynthesis. May increase the efficiency of translation by recycling ribosomes from one round of translation to another. In Shewanella woodyi (strain ATCC 51908 / MS32), this protein is Ribosome-recycling factor.